The primary structure comprises 932 residues: uncharacterized protein (932 aa).

Disordered stretches follow at residues 26–120, 158–289, 304–617, 635–720, and 802–863; these read NINN…NMLT, MGIG…EEKK, NNNN…INHD, QQSQ…PPLV, and SVSS…FPLE. Low complexity-rich tracts occupy residues 41-105 and 163-241; these read NNNI…IISS and NNNN…YGNN. Residues 242–253 are compositionally biased toward polar residues; sequence TPVNYIHNNSTP. Residues 265–285 are compositionally biased toward acidic residues; the sequence is SDEEDSVLYSSDDSEESDYEE. A compositionally biased stretch (low complexity) spans 304 to 475; the sequence is NNNNINNNNM…NNNNNNNNNN (172 aa). 2 stretches are compositionally biased toward polar residues: residues 476-492 and 527-540; these read ENYVGSSLSNSADNTES and DIPNSYPISPTKQQ. The segment covering 548–590 has biased composition (low complexity); that stretch reads SPVYSPPNNLSPLSSPYLHHNSNNNSNNGGGNSNNNNTNFNYG. Residues 606 to 617 show a composition bias toward basic and acidic residues; sequence GERDPPHVINHD. Low complexity-rich tracts occupy residues 635 to 666, 696 to 707, and 813 to 853; these read QQSQHQHQQQQQQPQSQQQPFYSPYQSPPSSS, SPPNTSISSLSS, and NSSN…NNNS. The segment covering 854–863 has biased composition (basic and acidic residues); the sequence is EPKKPKFPLE.

This is an uncharacterized protein from Dictyostelium discoideum (Social amoeba).